The following is a 469-amino-acid chain: tRNA-2-methylthio-N(6)-dimethylallyladenosine synthase (469 aa).

One can recognise an MTTase N-terminal domain in the interval 22–142; that stretch reads RKVFIKTYGC…LPEALRRAKE (121 aa). [4Fe-4S] cluster contacts are provided by Cys31, Cys67, Cys105, Cys183, Cys187, and Cys190. The Radical SAM core domain occupies 169 to 401; sequence RARGVTAFLT…QALLLKQQQE (233 aa). The TRAM domain occupies 404 to 466; sequence ESCIGKEIDL…TNSLFAERAE (63 aa).

Belongs to the methylthiotransferase family. MiaB subfamily. As to quaternary structure, monomer. It depends on [4Fe-4S] cluster as a cofactor.

It is found in the cytoplasm. It carries out the reaction N(6)-dimethylallyladenosine(37) in tRNA + (sulfur carrier)-SH + AH2 + 2 S-adenosyl-L-methionine = 2-methylsulfanyl-N(6)-dimethylallyladenosine(37) in tRNA + (sulfur carrier)-H + 5'-deoxyadenosine + L-methionine + A + S-adenosyl-L-homocysteine + 2 H(+). Its function is as follows. Catalyzes the methylthiolation of N6-(dimethylallyl)adenosine (i(6)A), leading to the formation of 2-methylthio-N6-(dimethylallyl)adenosine (ms(2)i(6)A) at position 37 in tRNAs that read codons beginning with uridine. The polypeptide is tRNA-2-methylthio-N(6)-dimethylallyladenosine synthase (Rhizobium etli (strain ATCC 51251 / DSM 11541 / JCM 21823 / NBRC 15573 / CFN 42)).